Here is a 116-residue protein sequence, read N- to C-terminus: Neuropeptide Y receptor type 1 (116 aa).

A helical membrane pass occupies residues 1-6 (LVLIAV). The Cytoplasmic segment spans residues 7–24 (ERHQLIINPRGWRPSNRH). A helical transmembrane segment spans residues 25 to 45 (AYVGIAVIWVLAVASSLPFLI). Residues 46–81 (YQVLTDEPFQNVTLDAFKDKYVCFDKFPSDSHRLSY) lie on the Extracellular side of the membrane. N-linked (GlcNAc...) asparagine glycosylation is present at Asn-56. The chain crosses the membrane as a helical span at residues 82 to 102 (TTLLLVLQYFGPLCFIFICYF). Over 103 to 116 (KIYIRLKRRNNMMD) the chain is Cytoplasmic.

The protein belongs to the G-protein coupled receptor 1 family.

The protein resides in the cell membrane. Receptor for neuropeptide Y and peptide YY. The polypeptide is Neuropeptide Y receptor type 1 (NPY1R) (Ovis aries (Sheep)).